We begin with the raw amino-acid sequence, 698 residues long: Capon-like protein (698 aa).

In terms of domain architecture, PID spans 25 to 194 (FFHGITFQAK…SELLDVEQIS (170 aa)). Positions 191-240 (EQISEQQLSEDGERGGGDNETPKKEHLAITPDLNHTQPQRPNHLDIMPSH) are disordered. Over residues 201–217 (DGERGGGDNETPKKEHL) the composition is skewed to basic and acidic residues. Coiled-coil stretches lie at residues 265-327 (RSEI…LASL), 379-484 (NQQL…LNAN), and 554-583 (LNEDIRLSIEQNLNNLEEQLKAAVSNGNLA). Over residues 396-423 (SQHLQNLQQQQQQQQQQQQQQTQAAPTA) the composition is skewed to low complexity. The segment at 396 to 460 (SQHLQNLQQQ…QQQQQQQQDA (65 aa)) is disordered. Residues 436–447 (YPSMSALQSISN) are compositionally biased toward polar residues. The segment covering 448 to 458 (QLQQQQQQQQQ) has biased composition (low complexity). The tract at residues 588 to 698 (GGSTSTRDTS…RTTWARHTTK (111 aa)) is disordered. A compositionally biased stretch (low complexity) spans 590–640 (STSTRDTSRSSSTLDSPSSPRLRSSNNNISPGSSNGNQNHNNNSNSNSSSS). Polar residues-rich tracts occupy residues 662–672 (LSATPSFITRS) and 679–698 (NRSQMMSQVQRTTWARHTTK).

As to expression, expressed at higher level in wing imaginal disk.

In terms of biological role, putative adapter protein. The protein is Capon-like protein of Drosophila melanogaster (Fruit fly).